A 547-amino-acid chain; its full sequence is Glucose-6-phosphate isomerase (547 aa).

The Proton donor role is filled by Glu-354. Residues His-385 and Lys-513 contribute to the active site.

Belongs to the GPI family.

It localises to the cytoplasm. The catalysed reaction is alpha-D-glucose 6-phosphate = beta-D-fructose 6-phosphate. It functions in the pathway carbohydrate biosynthesis; gluconeogenesis. The protein operates within carbohydrate degradation; glycolysis; D-glyceraldehyde 3-phosphate and glycerone phosphate from D-glucose: step 2/4. Functionally, catalyzes the reversible isomerization of glucose-6-phosphate to fructose-6-phosphate. The chain is Glucose-6-phosphate isomerase from Endomicrobium trichonymphae.